Reading from the N-terminus, the 280-residue chain is 4-diphosphocytidyl-2-C-methyl-D-erythritol kinase (280 aa).

Lys8 is an active-site residue. 91–101 provides a ligand contact to ATP; the sequence is PVAAGLAGGST. Asp133 is an active-site residue.

This sequence belongs to the GHMP kinase family. IspE subfamily.

The enzyme catalyses 4-CDP-2-C-methyl-D-erythritol + ATP = 4-CDP-2-C-methyl-D-erythritol 2-phosphate + ADP + H(+). It participates in isoprenoid biosynthesis; isopentenyl diphosphate biosynthesis via DXP pathway; isopentenyl diphosphate from 1-deoxy-D-xylulose 5-phosphate: step 3/6. Its function is as follows. Catalyzes the phosphorylation of the position 2 hydroxy group of 4-diphosphocytidyl-2C-methyl-D-erythritol. This is 4-diphosphocytidyl-2-C-methyl-D-erythritol kinase from Clostridium botulinum (strain Okra / Type B1).